A 392-amino-acid chain; its full sequence is Probable tRNA sulfurtransferase (392 aa).

One can recognise a THUMP domain in the interval 59 to 166 (SCYREALKRV…DEGLFIYTTE (108 aa)). Residues 186–187 (LL), 211–212 (YF), Arg-269, Gly-290, and Gln-299 contribute to the ATP site.

Belongs to the ThiI family.

It localises to the cytoplasm. It carries out the reaction [ThiI sulfur-carrier protein]-S-sulfanyl-L-cysteine + a uridine in tRNA + 2 reduced [2Fe-2S]-[ferredoxin] + ATP + H(+) = [ThiI sulfur-carrier protein]-L-cysteine + a 4-thiouridine in tRNA + 2 oxidized [2Fe-2S]-[ferredoxin] + AMP + diphosphate. The catalysed reaction is [ThiS sulfur-carrier protein]-C-terminal Gly-Gly-AMP + S-sulfanyl-L-cysteinyl-[cysteine desulfurase] + AH2 = [ThiS sulfur-carrier protein]-C-terminal-Gly-aminoethanethioate + L-cysteinyl-[cysteine desulfurase] + A + AMP + 2 H(+). It functions in the pathway cofactor biosynthesis; thiamine diphosphate biosynthesis. Functionally, catalyzes the ATP-dependent transfer of a sulfur to tRNA to produce 4-thiouridine in position 8 of tRNAs, which functions as a near-UV photosensor. Also catalyzes the transfer of sulfur to the sulfur carrier protein ThiS, forming ThiS-thiocarboxylate. This is a step in the synthesis of thiazole, in the thiamine biosynthesis pathway. The sulfur is donated as persulfide by IscS. The sequence is that of Probable tRNA sulfurtransferase from Coxiella burnetii (strain RSA 493 / Nine Mile phase I).